A 360-amino-acid polypeptide reads, in one-letter code: 3-isopropylmalate dehydrogenase (360 aa).

NAD(+) is bound at residue 76–89 (GPKWDKLDMAIRPE). Residues R96, R106, R134, and D224 each contribute to the substrate site. 3 residues coordinate Mg(2+): D224, D248, and D252. 282–294 (GSAPDIAGQNMAN) is an NAD(+) binding site.

It belongs to the isocitrate and isopropylmalate dehydrogenases family. LeuB type 1 subfamily. As to quaternary structure, homodimer. It depends on Mg(2+) as a cofactor. The cofactor is Mn(2+).

The protein resides in the cytoplasm. The catalysed reaction is (2R,3S)-3-isopropylmalate + NAD(+) = 4-methyl-2-oxopentanoate + CO2 + NADH. It functions in the pathway amino-acid biosynthesis; L-leucine biosynthesis; L-leucine from 3-methyl-2-oxobutanoate: step 3/4. In terms of biological role, catalyzes the oxidation of 3-carboxy-2-hydroxy-4-methylpentanoate (3-isopropylmalate) to 3-carboxy-4-methyl-2-oxopentanoate. The product decarboxylates to 4-methyl-2 oxopentanoate. This is 3-isopropylmalate dehydrogenase from Hahella chejuensis (strain KCTC 2396).